The sequence spans 156 residues: Peptide methionine sulfoxide reductase MsrA (156 aa).

Cysteine 10 is a catalytic residue.

The protein belongs to the MsrA Met sulfoxide reductase family.

The enzyme catalyses L-methionyl-[protein] + [thioredoxin]-disulfide + H2O = L-methionyl-(S)-S-oxide-[protein] + [thioredoxin]-dithiol. It carries out the reaction [thioredoxin]-disulfide + L-methionine + H2O = L-methionine (S)-S-oxide + [thioredoxin]-dithiol. Its function is as follows. Has an important function as a repair enzyme for proteins that have been inactivated by oxidation. Catalyzes the reversible oxidation-reduction of methionine sulfoxide in proteins to methionine. In Acidobacterium capsulatum (strain ATCC 51196 / DSM 11244 / BCRC 80197 / JCM 7670 / NBRC 15755 / NCIMB 13165 / 161), this protein is Peptide methionine sulfoxide reductase MsrA.